The following is a 192-amino-acid chain: Phosphoheptose isomerase (192 aa).

In terms of domain architecture, SIS spans 37 to 192 (IAASLRDGGK…IMLIEKELAV (156 aa)). 52–54 (NGG) contributes to the substrate binding site. Positions 61 and 65 each coordinate Zn(2+). Substrate is bound by residues glutamate 65, 93-94 (ND), 119-121 (STS), serine 124, and glutamine 172. Zn(2+) contacts are provided by glutamine 172 and histidine 180.

The protein belongs to the SIS family. GmhA subfamily. In terms of assembly, homotetramer. Zn(2+) serves as cofactor.

It localises to the cytoplasm. It carries out the reaction 2 D-sedoheptulose 7-phosphate = D-glycero-alpha-D-manno-heptose 7-phosphate + D-glycero-beta-D-manno-heptose 7-phosphate. It participates in carbohydrate biosynthesis; D-glycero-D-manno-heptose 7-phosphate biosynthesis; D-glycero-alpha-D-manno-heptose 7-phosphate and D-glycero-beta-D-manno-heptose 7-phosphate from sedoheptulose 7-phosphate: step 1/1. In terms of biological role, catalyzes the isomerization of sedoheptulose 7-phosphate in D-glycero-D-manno-heptose 7-phosphate. This chain is Phosphoheptose isomerase, found in Tolumonas auensis (strain DSM 9187 / NBRC 110442 / TA 4).